The chain runs to 102 residues: Monothiol glutaredoxin-S4 (102 aa).

In terms of domain architecture, Glutaredoxin spans 1 to 101; sequence MDKLQKMISE…PMLKRVGALW (101 aa). Cysteine 21 contributes to the [2Fe-2S] cluster binding site. Positions 99-102 match the Responsive for interaction with TGA factors motif; sequence ALWL.

Belongs to the glutaredoxin family. CC-type subfamily.

The protein resides in the cytoplasm. It is found in the nucleus. May only reduce GSH-thiol disulfides, but not protein disulfides. This chain is Monothiol glutaredoxin-S4 (GRXS4), found in Arabidopsis thaliana (Mouse-ear cress).